Reading from the N-terminus, the 120-residue chain is UPF0102 protein TW312 (120 aa).

It belongs to the UPF0102 family.

This is UPF0102 protein TW312 from Tropheryma whipplei (strain TW08/27) (Whipple's bacillus).